A 642-amino-acid polypeptide reads, in one-letter code: Threonine--tRNA ligase (642 aa).

Residues 1 to 61 (MPVITLPDGS…ENDAQLSIIT (61 aa)) form the TGS domain. A catalytic region spans residues 243–534 (DHRKIGKQLD…LTEEFAGFFP (292 aa)). Lys-286 carries the post-translational modification N6-acetyllysine. Zn(2+) contacts are provided by Cys-334, His-385, and His-511.

It belongs to the class-II aminoacyl-tRNA synthetase family. In terms of assembly, homodimer. Zn(2+) is required as a cofactor.

It localises to the cytoplasm. It carries out the reaction tRNA(Thr) + L-threonine + ATP = L-threonyl-tRNA(Thr) + AMP + diphosphate + H(+). In terms of biological role, catalyzes the attachment of threonine to tRNA(Thr) in a two-step reaction: L-threonine is first activated by ATP to form Thr-AMP and then transferred to the acceptor end of tRNA(Thr). Also edits incorrectly charged L-seryl-tRNA(Thr). This chain is Threonine--tRNA ligase, found in Shigella boydii serotype 18 (strain CDC 3083-94 / BS512).